Reading from the N-terminus, the 461-residue chain is MFMNPLLPPLWPMIATAVETETEIAPLVLAGVLLSLVVIYFASKLGGEVCLRLNLPPVLGELVGGVLVGVSALKLLLFPEGGLAPEDSLVIQLLMGSADLSPEAAQSVFSAQSEVISVISELGVIILLFEIGLESNLKELIRVGPQAAIVAVVGVVTPFSLGTIGLMTIFGVAAIPAIFAGAALTATSIGITAKVLAEINRLSSNEGQIIIGAAVLDDILGIIVLAVVGSLVKTGEIQISNIIYLILSATGFVVGSILIGRLLSPFYVSLVNRMKTRGQLLLVSICVAFVLSYIAQIVQLEAILGSFAAGLILAETEKREDLEEQILPLADFFVPVFFVCVGAKTDVSVLNPAVPANREGLIIAAFLILVAIVGKVVTGFTLFGKSELNKLAIGVGMIPRGEVGLVFAGVGAASGALDPATDAAIIVMVIVTTFVAPPWLRAVFEGAKKEEAPEKPVPTPD.

11 helical membrane-spanning segments follow: residues 22-42, 58-78, 113-133, 148-170, 175-197, 209-229, 239-259, 280-300, 360-380, 391-411, and 424-444; these read TEIA…IYFA, VLGE…LLLF, SEVI…EIGL, AIVA…MTIF, IPAI…KVLA, IIIG…AVVG, ISNI…SILI, LLLV…IVQL, GLII…VTGF, LAIG…AGVG, and AIIV…RAVF.

This sequence belongs to the monovalent cation:proton antiporter 2 (CPA2) transporter (TC 2.A.37) family.

It is found in the cellular thylakoid membrane. Functionally, na(+)/H(+) antiporter that transports sodium from the cytoplasm into the thylakoid lumen in exchange for protons. Contributes to sodium homeostasis and tolerance. Also has Li(+)/H(+) antiport activity under K(+)-free conditions, but not under K(+)-rich conditions. In Synechocystis sp. (strain ATCC 27184 / PCC 6803 / Kazusa), this protein is High-affinity Na(+)/H(+) antiporter NhaS3 (nhaS3).